The sequence spans 365 residues: Aminomethyltransferase (365 aa).

Belongs to the GcvT family. In terms of assembly, the glycine cleavage system is composed of four proteins: P, T, L and H.

The enzyme catalyses N(6)-[(R)-S(8)-aminomethyldihydrolipoyl]-L-lysyl-[protein] + (6S)-5,6,7,8-tetrahydrofolate = N(6)-[(R)-dihydrolipoyl]-L-lysyl-[protein] + (6R)-5,10-methylene-5,6,7,8-tetrahydrofolate + NH4(+). Functionally, the glycine cleavage system catalyzes the degradation of glycine. The sequence is that of Aminomethyltransferase from Chlorobaculum tepidum (strain ATCC 49652 / DSM 12025 / NBRC 103806 / TLS) (Chlorobium tepidum).